Consider the following 550-residue polypeptide: Membrane protein insertase YidC (550 aa).

Residues 6-26 (NLLVIALLFVSFMIWQTWEQD) form a helical membrane-spanning segment. Disordered stretches follow at residues 28-54 (APKP…GVPA) and 111-132 (QSGL…RPLY). Positions 30 to 52 (KPQVQQTTQTTTTAAGSAASQGV) are enriched in low complexity. Residues 111 to 127 (QSGLTGRNGPDNPNNNK) are compositionally biased toward polar residues. A run of 4 helical transmembrane segments spans residues 346 to 366 (KWIH…TFIV), 421 to 441 (LGGC…YYML), 459 to 479 (LSAQ…MFFI), and 500 to 520 (PVIF…YYIV).

This sequence belongs to the OXA1/ALB3/YidC family. Type 1 subfamily. In terms of assembly, interacts with the Sec translocase complex via SecD. Specifically interacts with transmembrane segments of nascent integral membrane proteins during membrane integration.

Its subcellular location is the cell inner membrane. In terms of biological role, required for the insertion and/or proper folding and/or complex formation of integral membrane proteins into the membrane. Involved in integration of membrane proteins that insert both dependently and independently of the Sec translocase complex, as well as at least some lipoproteins. Aids folding of multispanning membrane proteins. The protein is Membrane protein insertase YidC of Cronobacter sakazakii (strain ATCC BAA-894) (Enterobacter sakazakii).